The following is a 462-amino-acid chain: Signal recognition particle protein (462 aa).

GTP-binding positions include 107–114, 190–194, and 248–251; these read GLQGAGKT, DTAGR, and TKVD.

This sequence belongs to the GTP-binding SRP family. SRP54 subfamily. As to quaternary structure, part of the signal recognition particle protein translocation system, which is composed of SRP and FtsY. SRP is a ribonucleoprotein composed of Ffh and a 4.5S RNA molecule.

The protein localises to the cytoplasm. It catalyses the reaction GTP + H2O = GDP + phosphate + H(+). Involved in targeting and insertion of nascent membrane proteins into the cytoplasmic membrane. Binds to the hydrophobic signal sequence of the ribosome-nascent chain (RNC) as it emerges from the ribosomes. The SRP-RNC complex is then targeted to the cytoplasmic membrane where it interacts with the SRP receptor FtsY. Interaction with FtsY leads to the transfer of the RNC complex to the Sec translocase for insertion into the membrane, the hydrolysis of GTP by both Ffh and FtsY, and the dissociation of the SRP-FtsY complex into the individual components. In Haemophilus influenzae (strain ATCC 51907 / DSM 11121 / KW20 / Rd), this protein is Signal recognition particle protein.